Reading from the N-terminus, the 167-residue chain is Fimbrial adapter PapF (167 aa).

Residues 1-18 (MIRLSLFISLLLTSVAVL) form the signal peptide.

It localises to the secreted. Its subcellular location is the fimbrium. In terms of biological role, adapter that links the PapG adhesin to the distal end of the tip fibrillum. PapF is required for the correct presentation of the adhesin at the distal end of the tip fibrillum. Pili are polar filaments radiating from the surface of the bacterium to a length of 0.5-1.5 micrometers and numbering 100-300 per cell, and enable bacteria to colonize the epithelium of specific host organs. This is Fimbrial adapter PapF (papF) from Escherichia coli.